The primary structure comprises 103 residues: Gene 56 protein (103 aa).

The Glutaredoxin domain maps to 9 to 103 (WDGAHVRTLF…DYYTASETGL (95 aa)).

The sequence is that of Gene 56 protein (56) from Mycobacterium phage L5 (Mycobacteriophage L5).